The chain runs to 570 residues: PTS system lactose-specific EIICB component (570 aa).

The PTS EIIC type-3 domain occupies 9–410 (IEKGKPFFEK…VVDIIIYYPF (402 aa)). 9 helical membrane-spanning segments follow: residues 31–51 (GFIS…IAYV), 65–85 (AILM…VAGT), 104–124 (INFI…ASDP), 133–153 (AFMG…TVIV), 178–198 (FKDL…DLVI), 223–243 (GWIG…VGIH), 283–303 (MFIV…MFMW), 340–360 (VFFI…KLFV), and 382–402 (IIMG…LIVV). One can recognise a PTS EIIB type-3 domain in the interval 467 to 570 (QTNVLVLCAG…LDFVQQQFEN (104 aa)). Cys474 acts as the Phosphocysteine intermediate; for EIIB activity in catalysis. Cys474 bears the Phosphocysteine; by EIIA mark.

It is found in the cell membrane. The enzyme catalyses lactose(out) + N(pros)-phospho-L-histidyl-[protein] = lactose 6-phosphate(in) + L-histidyl-[protein]. The phosphoenolpyruvate-dependent sugar phosphotransferase system (sugar PTS), a major carbohydrate active transport system, catalyzes the phosphorylation of incoming sugar substrates concomitantly with their translocation across the cell membrane. The enzyme II LacEF PTS system is involved in lactose transport. This Staphylococcus aureus (strain N315) protein is PTS system lactose-specific EIICB component.